A 407-amino-acid chain; its full sequence is Peptidase T (407 aa).

H81 provides a ligand contact to Zn(2+). D83 is an active-site residue. D142 provides a ligand contact to Zn(2+). Catalysis depends on E176, which acts as the Proton acceptor. Zn(2+)-binding residues include E177, D199, and H381.

The protein belongs to the peptidase M20B family. The cofactor is Zn(2+).

Its subcellular location is the cytoplasm. The catalysed reaction is Release of the N-terminal residue from a tripeptide.. In terms of biological role, cleaves the N-terminal amino acid of tripeptides. This is Peptidase T from Streptococcus pneumoniae (strain JJA).